The following is a 354-amino-acid chain: DNA polymerase IV (354 aa).

One can recognise a UmuC domain in the interval 6–187; sequence IIHIDCDCFY…LPVARLHGVG (182 aa). 2 residues coordinate Mg(2+): Asp10 and Asp105. Glu106 is a catalytic residue.

It belongs to the DNA polymerase type-Y family. As to quaternary structure, monomer. The cofactor is Mg(2+).

The protein resides in the cytoplasm. It catalyses the reaction DNA(n) + a 2'-deoxyribonucleoside 5'-triphosphate = DNA(n+1) + diphosphate. Poorly processive, error-prone DNA polymerase involved in untargeted mutagenesis. Copies undamaged DNA at stalled replication forks, which arise in vivo from mismatched or misaligned primer ends. These misaligned primers can be extended by PolIV. Exhibits no 3'-5' exonuclease (proofreading) activity. May be involved in translesional synthesis, in conjunction with the beta clamp from PolIII. This chain is DNA polymerase IV, found in Pseudomonas entomophila (strain L48).